The following is a 495-amino-acid chain: MARRSRLRRLLLLLLLPVASTSDAEHRLFERLFEDYNEIIRPVANVSDPVIIQFEVSMSQLVKVDEVNQIMETNLWLKQIWNDYKLKWNPSDYDGAEFMRVPAEKIWKPDIVLYNNAVGDFQVDDKTKALLKYTGEVTWIPPAIFKSSCKIDVTYFPFDYQNCTMKFGSWSYDKAKIDLVLIGSSMNLKDYWESGEWAIIKAPGYKHDIKYNCCEEIYPDITYSLYIRRLPLFYTINLIIPCLLISFLTVLVFYLPSDCGEKVTLCISVLLSLTVFLLVITETIPSTSLVIPLIGEYLLFTMIFVTLSIVITVFVLNVHYRTPTTHTMPAWVKTIFLNLLPRVMFMTRPASNEGNTQRPRPFYSAELSNLNCFSRIESKVCKEGYPCQDGLCGYCHHRRAKISNFSANLTRSSSSESVDAVLSLSALSPEIKEAIQSVKYIAENMKAQNEAKEIQDDWKYVAMVIDRIFLWVFILVCILGTAGLFLQPLMTRDDA.

Residues 1–21 (MARRSRLRRLLLLLLLPVAST) form the signal peptide. Residues 22 to 240 (SDAEHRLFER…PLFYTINLII (219 aa)) lie on the Extracellular side of the membrane. 2 N-linked (GlcNAc...) asparagine glycosylation sites follow: N45 and N162. Disulfide bonds link C149–C163 and C213–C214. A helical membrane pass occupies residues 241-256 (PCLLISFLTVLVFYLP). Topologically, residues 257–258 (SD) are cytoplasmic. A helical transmembrane segment spans residues 259-275 (CGEKVTLCISVLLSLTV). Na(+) is bound at residue E261. Residues 276–297 (FLLVITETIPSTSLVIPLIGEY) lie on the Extracellular side of the membrane. A helical membrane pass occupies residues 298–316 (LLFTMIFVTLSIVITVFVL). The Cytoplasmic portion of the chain corresponds to 317–464 (NVHYRTPTTH…QDDWKYVAMV (148 aa)). Residues S403 and S406 each carry the phosphoserine modification. The chain crosses the membrane as a helical span at residues 465–483 (IDRIFLWVFILVCILGTAG). The Extracellular segment spans residues 484 to 495 (LFLQPLMTRDDA).

Belongs to the ligand-gated ion channel (TC 1.A.9) family. Acetylcholine receptor (TC 1.A.9.1) subfamily. Alpha-3/CHRNA3 sub-subfamily. In terms of assembly, neuronal AChR is composed of two different types of subunits: alpha and beta. CHRNA3/Alpha-3 subunit can be combined to CHRNB2/beta-2 or CHRNB4/beta-4 to give rise to functional receptors. Part of a complex composed of STUB1/CHIP, VCP/p97, CHRNA3, and UBXN2A that modulates the ubiquitination and endoplasmic reticulum-associated degradation (ERAD) of CHRNA3. Within the complex UBXN2A acts as a scaffold protein required for the interaction of CHRNA3 with VCP/p97, this interaction also inhibits CHRNA3 ubiquitination by STUB1/CHIP and subsequently ERAD. Interacts with UBXN2A (via SEP domain), the interaction is required for the interaction of CHRNA3 in the STUB1:VCP:UBXN2A complex. Interacts with RIC3; which is required for proper folding and assembly. Interacts with LYPD6. Post-translationally, ubiquitinated; by STUB1/CHIP and thereafter degraded by the 26S proteosome complex.

The protein resides in the synaptic cell membrane. The protein localises to the cell membrane. It is found in the endoplasmic reticulum. Its subcellular location is the golgi apparatus. The catalysed reaction is K(+)(in) = K(+)(out). The enzyme catalyses Na(+)(in) = Na(+)(out). It carries out the reaction Ca(2+)(in) = Ca(2+)(out). Its activity is regulated as follows. Activated by a myriad of ligands such as acetylcholine, cytisine, nicotine, choline and epibatidine. The heteropentamer CHRNA3:CHRNB2 activity is blocked by alpha-conotoxins ImI, ImII, PnIA, GID and MII. The heteropentamer CHRNA3:CHRNB4 activity is blocked by the alpha-conotoxin ImI and AuIB. Functionally, component of neuronal acetylcholine receptors (nAChRs) that function as pentameric, ligand-gated cation channels with high calcium permeability among other activities. nAChRs are excitatory neurotrasnmitter receptors formed by a collection of nAChR subunits known to mediate synaptic transmission in the nervous system and the neuromuscular junction. Each nAchR subunit confers differential attributes to channel properties, including activation, deactivation and desensitization kinetics, pH sensitivity, cation permeability, and binding to allosteric modulators. CHRNA3 forms heteropentameric neuronal acetylcholine receptors with CHRNB2 and CHRNB4. CHRNA3:CHRNB4 being predominant in neurons of the autonomic ganglia, it is known as ganglionic nicotinic receptor. CHRNA3:CHRNB4 also plays an important role in the habenulo-interpeduncular tract, modulating the mesolimbic dopamine system and affecting reward circuits and addiction. Hypothalamic CHRNA3:CHRNB4 nAChR activation by nicotine leads to activation of POMC neurons and a decrease in food intake. Also expressed in the urothelium where it modulates reflex bladder activity by increasing intracellular calcium through extracellular influx and basal ATP release. The polypeptide is Neuronal acetylcholine receptor subunit alpha-3 (CHRNA3) (Bos taurus (Bovine)).